A 276-amino-acid chain; its full sequence is MSWLQVVVLSVLQGLTEFLPVSSSGHLAIASRVFFEDDAGASFTAVSQLGTEVAVLVYFARDIVRIVKAWFAGLFRAGQRSADYWLGWWVIIGTIPISVVGLLFKDEIRTGARNLWLVATAMIVFSFVIAAAEYYGRQARRVEQLTWRDSIIVGLAQCLALVPGVSRSGATISAGLFLGMHRELAARFGFLLAIPAVFASGLFSLPDAFEPVGEGMSASGAQLFVSIVIAFVVGYAAVAWFLRFLVRHSMYWFVGYRIVLGTVVLVLLSAGVVSAI.

7 helical membrane passes run Met-1–Val-21, Ala-39–Phe-59, Tyr-84–Phe-104, Leu-115–Tyr-135, Phe-188–Ala-208, Gln-222–Leu-242, and Phe-253–Val-273.

It belongs to the UppP family.

The protein localises to the cell membrane. It carries out the reaction di-trans,octa-cis-undecaprenyl diphosphate + H2O = di-trans,octa-cis-undecaprenyl phosphate + phosphate + H(+). Functionally, catalyzes the dephosphorylation of undecaprenyl diphosphate (UPP). Confers resistance to bacitracin. The protein is Undecaprenyl-diphosphatase of Mycolicibacterium vanbaalenii (strain DSM 7251 / JCM 13017 / BCRC 16820 / KCTC 9966 / NRRL B-24157 / PYR-1) (Mycobacterium vanbaalenii).